Consider the following 146-residue polypeptide: UPF0260 protein SO_2573 (146 aa).

The protein belongs to the UPF0260 family.

The protein is UPF0260 protein SO_2573 of Shewanella oneidensis (strain ATCC 700550 / JCM 31522 / CIP 106686 / LMG 19005 / NCIMB 14063 / MR-1).